Reading from the N-terminus, the 214-residue chain is Large ribosomal subunit protein uL3 (214 aa).

Positions 129–155 (FGRGPMSHGSKNHRRPGSVGAGTTPGR) are disordered.

This sequence belongs to the universal ribosomal protein uL3 family. As to quaternary structure, part of the 50S ribosomal subunit. Forms a cluster with proteins L14 and L19.

One of the primary rRNA binding proteins, it binds directly near the 3'-end of the 23S rRNA, where it nucleates assembly of the 50S subunit. This Synechococcus sp. (strain JA-3-3Ab) (Cyanobacteria bacterium Yellowstone A-Prime) protein is Large ribosomal subunit protein uL3.